The chain runs to 1135 residues: Glutamate receptor ionotropic, NMDA 3A (1135 aa).

An N-terminal signal peptide occupies residues 1 to 23 (MRRLSLWWLLSRVCLLLPPPCAL). Topologically, residues 24–674 (VLAGVPSSSS…PIGAFMWPLH (651 aa)) are extracellular. The tract at residues 60–117 (TAPRAASRAQEGGRAGAQRDDPESGTWRPPAPSQGARWLGSALHGRGPPGSRKLGEGA) is disordered. Residues Asn-145, Asn-264, Asn-275, Asn-285, Asn-296, Asn-300, Asn-426, Asn-439, Asn-549, and Asn-565 are each glycosylated (N-linked (GlcNAc...) asparagine). 2 cysteine pairs are disulfide-bonded: Cys-537–Cys-575 and Cys-543–Cys-576. The glycine site is built by Ser-631, Ser-633, and Arg-638. Residues Ser-633 and Arg-638 each coordinate D-serine. Residues 675-694 (WTMWLGIFVALHITAIFLTL) form a helical membrane-spanning segment. Residues 695–715 (YEWKSPFGMTPKGRNRNKVFS) lie on the Cytoplasmic side of the membrane. Positions 716 to 727 (FSSALNVCYALL) form an intramembrane region, discontinuously helical. The Cytoplasmic segment spans residues 728–741 (FGRTAAIKPPKCWT). A helical transmembrane segment spans residues 742–761 (GRFLMNLWAIFCMFCLSTYT). Over 762-932 (ANLAAVMVGE…TLQMGIKHFS (171 aa)) the chain is Extracellular. Position 801 (Ser-801) interacts with glycine. 3 residues coordinate D-serine: Ser-801, Ala-802, and Asp-845. Position 845 (Asp-845) interacts with glycine. Cys-859 and Cys-913 form a disulfide bridge. N-linked (GlcNAc...) asparagine glycosylation is present at Asn-886. The chain crosses the membrane as a helical span at residues 933 to 948 (GLFVLLCIGFGLSILT). The Cytoplasmic portion of the chain corresponds to 949–1135 (TIGEHIVHRL…YQKTNRTCES (187 aa)). The tract at residues 951–987 (GEHIVHRLLLPRIKNKSKLQYWLHTSQRFHRALNTSF) is PPP2CB binding site. Residues 1080–1129 (TTNGKADSLNVTRSSVIQELSELEKQIQVIRQELQLAVSRKTELEEYQKT) adopt a coiled-coil conformation. A GIT1-binding region spans residues 1082–1115 (NGKADSLNVTRSSVIQELSELEKQIQVIRQELQL).

It belongs to the glutamate-gated ion channel (TC 1.A.10.1) family. NR3A/GRIN3A subfamily. In terms of assembly, heterotetramer. Forms heterotetrameric channels composed of two GluN1/zeta subunits (GRIN1), and two identical GluN3 subunits (GRIN3A or GRIN3B) (in vitro). Can also form heterotetrameric channels that contain at least two GluN1 subunits and at least a combination of one GluN2 and one GluN3 subunits (in vitro). Does not form functional homomeric channels. Found in a complex with GRIN1, GRIN2A or GRIN2B and PPP2CB. Probably interacts with PPP2CB. No complex with PPP2CB is detected when NMDARs are stimulated by NMDA. Interacts (via C-terminus) with GIT1, but not with GRIA1/GluA1, nor with synaptophysin/SYP; this interaction competes with GIT1 interaction with ARHGEF7/beta-PIX. Post-translationally, N-glycosylated. As to expression, isoform 1 and isoform 2 are expressed in olfactory bulb, frontal occipital, entorhinal and pyriform cortices, hippocampus, striatum, thalamus, cerebellum and spinal cord.

It localises to the cell membrane. The protein localises to the postsynaptic cell membrane. Its subcellular location is the postsynaptic density. The enzyme catalyses Ca(2+)(in) = Ca(2+)(out). The catalysed reaction is Na(+)(in) = Na(+)(out). With respect to regulation, excitatory glycine receptors are inhibited by D-serine at a concentrion of 10uM. Functionally, component of a non-conventional N-methyl-D-aspartate (NMDA) receptors (NMDARs) that function as heterotetrameric, ligand-gated cation channels with low calcium permeability and low voltage-dependent block by Mg(2+). During the development of neural circuits, participates in the synaptic refinement period, restricting spine maturation and growth. Forms glutamatergic receptor complexes with GluN1 and GluN2 subunits which are activated by glycine binding to the GluN1 and GluN3 subunits and L-glutamate binding to GluN2 subunits. Forms excitatory glycinergic receptor complexes with GluN1 alone which are activated by glycine binding to the GluN1 and GluN3 subunits. GluN3A subunit also binds D-serine. Each GluN3 subunit confers differential attributes to channel properties, including activation, deactivation and desensitization kinetics, pH sensitivity, Ca2(+) permeability, and binding to allosteric modulators. By competing with GIT1 interaction with ARHGEF7/beta-PIX, may reduce GIT1/ARHGEF7-regulated local activation of RAC1, hence affecting signaling and limiting the maturation and growth of inactive synapses. This Rattus norvegicus (Rat) protein is Glutamate receptor ionotropic, NMDA 3A.